Consider the following 2163-residue polypeptide: Myosin-VIIa (2163 aa).

The region spanning 58–728 (QGVEDMISLG…HDLFLEQERD (671 aa)) is the Myosin motor domain. 151-158 (GESGAGKT) contacts ATP. Actin-binding regions lie at residues 607–629 (LDSL…KPNE) and 707–721 (QLGH…AHDL). 4 IQ domains span residues 731–753 (LTRK…RFLR), 754–783 (MRQA…GYMR), 800–822 (LRGH…EYGL), and 823–852 (KMWA…EYRR). Residues 886–914 (RLNEIERKEIEQELEERRRVEVKKNIIND) are a coiled coil. The segment at 937 to 958 (PDSSSEAPTPHGGRETSVFNDL) is disordered. Positions 1003–1239 (YSRKPLKHPL…PSWLELQATK (237 aa)) constitute a MyTH4 1 domain. The FERM 1 domain maps to 1244–1554 (IMLPITFMDG…YFLEGLKKRS (311 aa)). An SH3 domain is found at 1552-1621 (KRSKFVIALQ…PAEIVYVLPS (70 aa)). The MyTH4 2 domain occupies 1697 to 1845 (YSREPLKQPL…PHQVEVEAIQ (149 aa)). The region spanning 1851–2154 (IFHKVYFPDD…SYISLMLTNM (304 aa)) is the FERM 2 domain.

Belongs to the TRAFAC class myosin-kinesin ATPase superfamily. Myosin family. As to quaternary structure, homodimerizes in a two headed molecule through the formation of a coiled-coil rod.

Its subcellular location is the cytoplasm. Myosins are actin-based motor molecules with ATPase activity. Unconventional myosins serve in intracellular movements: can function in cells as a single-molecule cargo transporter. A very slow and high-duty-ratio motor, may be suitable for tension maintenance of actin filaments. Their highly divergent tails are presumed to bind to membranous compartments, which would be moved relative to actin filaments. Plays a key role in the formation of cellular projections and other actin-based functions required for embryonic and larval viability. Necessary for auditory transduction: plays a role in Johnston organ (JO) organization by functioning in scolopidial apical attachment and therefore to acoustic stimulus propagation from the antenna a2/a3 joint to transducing elements. The chain is Myosin-VIIa from Aedes aegypti (Yellowfever mosquito).